We begin with the raw amino-acid sequence, 199 residues long: NAD(P)H dehydrogenase (quinone) (199 aa).

In terms of domain architecture, Flavodoxin-like spans V4–V190. FMN is bound by residues S10–I15 and T79–F81. Y12 is an NAD(+) binding site. W99 provides a ligand contact to substrate. FMN-binding positions include S114–G119 and H134.

Belongs to the WrbA family. Requires FMN as cofactor.

The catalysed reaction is a quinone + NADH + H(+) = a quinol + NAD(+). It catalyses the reaction a quinone + NADPH + H(+) = a quinol + NADP(+). The sequence is that of NAD(P)H dehydrogenase (quinone) from Marinobacter nauticus (strain ATCC 700491 / DSM 11845 / VT8) (Marinobacter aquaeolei).